We begin with the raw amino-acid sequence, 389 residues long: Alanine racemase TOXG (389 aa).

The residue at position 235 (lysine 235) is an N6-(pyridoxal phosphate)lysine.

It belongs to the threonine aldolase family. Pyridoxal 5'-phosphate is required as a cofactor.

It catalyses the reaction L-alanine = D-alanine. It participates in mycotoxin biosynthesis; HC-toxin biosynthesis. Functionally, alanine racemase, part of the diffuse TOX2 gene cluster that mediates the biosynthesis of the HC-toxin, cyclic tetrapeptide of structure cyclo(D-Pro-L-Ala-D-Ala-L-Aeo), where Aeo stands for 2-amino-9,10-epoxi-8-oxodecanoic acid. HC-toxin is a determinant of specificity and virulence in the interaction between the producing fungus and its host, maize. TOXG catalyzes the conversion of L-alanine into D-alanine, an essential precursor for the production of the major forms of HC-toxin by the non-ribosomal peptide synthetase HTS1. The protein is Alanine racemase TOXG of Cochliobolus carbonum (Maize leaf spot fungus).